We begin with the raw amino-acid sequence, 227 residues long: Phosphoribosylformylglycinamidine synthase subunit PurQ (227 aa).

One can recognise a Glutamine amidotransferase type-1 domain in the interval 3–225; that stretch reads FAVIVLPGSN…VKNWRDTHVT (223 aa). Cys86 serves as the catalytic Nucleophile. Residues His194 and Glu196 contribute to the active site.

Part of the FGAM synthase complex composed of 1 PurL, 1 PurQ and 2 PurS subunits.

Its subcellular location is the cytoplasm. The enzyme catalyses N(2)-formyl-N(1)-(5-phospho-beta-D-ribosyl)glycinamide + L-glutamine + ATP + H2O = 2-formamido-N(1)-(5-O-phospho-beta-D-ribosyl)acetamidine + L-glutamate + ADP + phosphate + H(+). The catalysed reaction is L-glutamine + H2O = L-glutamate + NH4(+). It participates in purine metabolism; IMP biosynthesis via de novo pathway; 5-amino-1-(5-phospho-D-ribosyl)imidazole from N(2)-formyl-N(1)-(5-phospho-D-ribosyl)glycinamide: step 1/2. In terms of biological role, part of the phosphoribosylformylglycinamidine synthase complex involved in the purines biosynthetic pathway. Catalyzes the ATP-dependent conversion of formylglycinamide ribonucleotide (FGAR) and glutamine to yield formylglycinamidine ribonucleotide (FGAM) and glutamate. The FGAM synthase complex is composed of three subunits. PurQ produces an ammonia molecule by converting glutamine to glutamate. PurL transfers the ammonia molecule to FGAR to form FGAM in an ATP-dependent manner. PurS interacts with PurQ and PurL and is thought to assist in the transfer of the ammonia molecule from PurQ to PurL. This is Phosphoribosylformylglycinamidine synthase subunit PurQ from Bacillus pumilus (strain SAFR-032).